Reading from the N-terminus, the 316-residue chain is SWR complex protein 2 (316 aa).

Disordered stretches follow at residues 1–81 (MSAT…GEEV), 93–127 (KRKI…KKKY), and 153–180 (ETRL…TMTQ). Residues 20 to 31 (KMRELLEKEHLR) show a composition bias toward basic and acidic residues. Residues 20–95 (KMRELLEKEH…RDEERIKKRK (76 aa)) adopt a coiled-coil conformation. The span at 40–56 (EKEDEEYNIEEEEEAER) shows a compositional bias: acidic residues. Phosphoserine is present on residues S64 and S65. Basic and acidic residues predominate over residues 70–81 (ELKKLEEEGEEV). Residues 167 to 180 (VSASANRQKGTMTQ) show a composition bias toward polar residues.

This sequence belongs to the VPS72/YL1 family. As to quaternary structure, component of the SWR1 chromatin-remodeling complex.

Its subcellular location is the nucleus. Participates in the catalytic exchange of histone H2A for the H2A variant pht1, an euchromatin-specific factor, leading to chromatin remodeling and changes in transcription of targeted genes. The sequence is that of SWR complex protein 2 (swc2) from Schizosaccharomyces pombe (strain 972 / ATCC 24843) (Fission yeast).